We begin with the raw amino-acid sequence, 79 residues long: Small ribosomal subunit protein bS16 (79 aa).

This sequence belongs to the bacterial ribosomal protein bS16 family.

The polypeptide is Small ribosomal subunit protein bS16 (Nitratidesulfovibrio vulgaris (strain ATCC 29579 / DSM 644 / CCUG 34227 / NCIMB 8303 / VKM B-1760 / Hildenborough) (Desulfovibrio vulgaris)).